The chain runs to 275 residues: 4-diphosphocytidyl-2-C-methyl-D-erythritol kinase (275 aa).

K15 is a catalytic residue. 97-107 (PMGSGLGGGSS) lines the ATP pocket. D137 is a catalytic residue.

This sequence belongs to the GHMP kinase family. IspE subfamily.

The catalysed reaction is 4-CDP-2-C-methyl-D-erythritol + ATP = 4-CDP-2-C-methyl-D-erythritol 2-phosphate + ADP + H(+). It functions in the pathway isoprenoid biosynthesis; isopentenyl diphosphate biosynthesis via DXP pathway; isopentenyl diphosphate from 1-deoxy-D-xylulose 5-phosphate: step 3/6. Catalyzes the phosphorylation of the position 2 hydroxy group of 4-diphosphocytidyl-2C-methyl-D-erythritol. This is 4-diphosphocytidyl-2-C-methyl-D-erythritol kinase from Pseudothermotoga lettingae (strain ATCC BAA-301 / DSM 14385 / NBRC 107922 / TMO) (Thermotoga lettingae).